The primary structure comprises 134 residues: Putative pre-16S rRNA nuclease (134 aa).

Belongs to the YqgF nuclease family.

It localises to the cytoplasm. Could be a nuclease involved in processing of the 5'-end of pre-16S rRNA. This Helicobacter pylori (strain G27) protein is Putative pre-16S rRNA nuclease.